Reading from the N-terminus, the 135-residue chain is Large ribosomal subunit protein eL32 (135 aa).

This sequence belongs to the eukaryotic ribosomal protein eL32 family.

This Methanococcus maripaludis (strain DSM 14266 / JCM 13030 / NBRC 101832 / S2 / LL) protein is Large ribosomal subunit protein eL32 (rpl32e).